The primary structure comprises 119 residues: Large ribosomal subunit protein bL20 (119 aa).

It belongs to the bacterial ribosomal protein bL20 family.

In terms of biological role, binds directly to 23S ribosomal RNA and is necessary for the in vitro assembly process of the 50S ribosomal subunit. It is not involved in the protein synthesizing functions of that subunit. This Burkholderia cenocepacia (strain HI2424) protein is Large ribosomal subunit protein bL20.